The primary structure comprises 392 residues: RNA-binding protein 42 (392 aa).

The RRM domain occupies 293 to 371 (FRIFCGDLGN…RPIKLRKSQW (79 aa)). The segment at 372 to 392 (KDRNMDVVRKKQREKKKLGLR) is disordered. Residues 381 to 392 (KKQREKKKLGLR) are compositionally biased toward basic residues.

Belongs to the RRM RBM42 family.

Its subcellular location is the nucleus. The protein localises to the cytoplasm. In terms of biological role, may bind RNA. This chain is RNA-binding protein 42 (rbm42), found in Xenopus tropicalis (Western clawed frog).